We begin with the raw amino-acid sequence, 59 residues long: Putative potassium channel toxin Ts23 (59 aa).

Residues 1–22 (MKAFYGILIIFILISMLDLSQQ) form the signal peptide. Disulfide bonds link Cys29–Cys50, Cys35–Cys55, and Cys39–Cys57.

It belongs to the short scorpion toxin superfamily. Potassium channel inhibitor family. Alpha-KTx 04 subfamily. Expressed by the venom gland.

The protein resides in the secreted. Its function is as follows. Potently blocks Kv1.1/KCNA1 (85%), Kv1.2/KCNA2 (91%), Kv1.3/KCNA3 (89%), Kv1.6/KCNA6 (94%), and Shaker (97%). The protein is Putative potassium channel toxin Ts23 of Tityus serrulatus (Brazilian scorpion).